We begin with the raw amino-acid sequence, 143 residues long: Endoribonuclease YbeY (143 aa).

Residues His109, His113, and His119 each coordinate Zn(2+).

Belongs to the endoribonuclease YbeY family. It depends on Zn(2+) as a cofactor.

Its subcellular location is the cytoplasm. Single strand-specific metallo-endoribonuclease involved in late-stage 70S ribosome quality control and in maturation of the 3' terminus of the 16S rRNA. The sequence is that of Endoribonuclease YbeY from Neorickettsia sennetsu (strain ATCC VR-367 / Miyayama) (Ehrlichia sennetsu).